Consider the following 140-residue polypeptide: Large-conductance mechanosensitive channel (140 aa).

A run of 2 helical transmembrane segments spans residues 16–36 (VIDLAVGVVIGAAFGKIVTAL) and 84–104 (INTVVQFVIIAFAIFLLVKLI).

The protein belongs to the MscL family. In terms of assembly, homopentamer.

The protein localises to the cell inner membrane. Its function is as follows. Channel that opens in response to stretch forces in the membrane lipid bilayer. May participate in the regulation of osmotic pressure changes within the cell. The chain is Large-conductance mechanosensitive channel from Xanthomonas oryzae pv. oryzae (strain PXO99A).